Consider the following 445-residue polypeptide: uncharacterized protein (445 aa).

Residues 139–160 (TESQKDLEYERKANKTKEENQQ) are disordered.

This is an uncharacterized protein from Mycoplasma pneumoniae (strain ATCC 29342 / M129 / Subtype 1) (Mycoplasmoides pneumoniae).